The following is a 413-amino-acid chain: Alpha-1-antitrypsin-like protein CM55-MS (413 aa).

The first 24 residues, 1–24 (MPSSISWGLLLLAALSCLGPGSLA), serve as a signal peptide directing secretion. Glutamine 25 bears the Pyrrolidone carboxylic acid mark. N-linked (GlcNAc...) asparagine glycans are attached at residues asparagine 65, asparagine 102, asparagine 165, and asparagine 266. The RCL stretch occupies residues 368–387 (GATVGGITFMSRPKEVIFDR).

The protein belongs to the serpin family. In terms of tissue distribution, expressed in liver.

It localises to the secreted. Its function is as follows. Serine protease inhibitor. The protein is Alpha-1-antitrypsin-like protein CM55-MS of Tamias sibiricus (Siberian chipmunk).